A 129-amino-acid chain; its full sequence is Histone H3 (129 aa).

A disordered region spans residues M1–W36. Residues A10–K21 are compositionally biased toward basic residues.

Belongs to the histone H3 family. The nucleosome is a histone octamer containing two molecules each of H2A, H2B, H3 and H4 assembled in one H3-H4 heterotetramer and two H2A-H2B heterodimers. The octamer wraps approximately 147 bp of DNA.

It is found in the nucleus. The protein localises to the chromosome. In terms of biological role, core component of nucleosome. Nucleosomes wrap and compact DNA into chromatin, limiting DNA accessibility to the cellular machineries which require DNA as a template. Histones thereby play a central role in transcription regulation, DNA repair, DNA replication and chromosomal stability. DNA accessibility is regulated via a complex set of post-translational modifications of histones, also called histone code, and nucleosome remodeling. The protein is Histone H3 of Leishmania infantum.